The sequence spans 154 residues: Large ribosomal subunit protein uL30 (154 aa).

The segment at 114–139 (PTLRLHPPRGGHDGIKHPTKEGGQLG) is disordered. Positions 123–133 (GGHDGIKHPTK) are enriched in basic and acidic residues.

This sequence belongs to the universal ribosomal protein uL30 family. As to quaternary structure, part of the 50S ribosomal subunit.

This chain is Large ribosomal subunit protein uL30, found in Natronomonas pharaonis (strain ATCC 35678 / DSM 2160 / CIP 103997 / JCM 8858 / NBRC 14720 / NCIMB 2260 / Gabara) (Halobacterium pharaonis).